The primary structure comprises 358 residues: C-C chemokine receptor type 3 (358 aa).

Residues 1 to 43 (MATYPEEAELETEFPGTTFYDYEFAQPCFKVSITDLGAQFLPS) lie on the Extracellular side of the membrane. A helical membrane pass occupies residues 44–64 (LFSLVFIVGLLGNITVIVVLT). Topologically, residues 65 to 74 (KYQKLKIMTN) are cytoplasmic. The helical transmembrane segment at 75 to 95 (IYLLNLAISDLLFLFTLPFWT) threads the bilayer. Topologically, residues 96–112 (YYVHWNKWVFGHFMCKI) are extracellular. Residues 113 to 133 (ISGLYYVGLFSEIFFIILLTI) traverse the membrane as a helical segment. The Cytoplasmic segment spans residues 134–154 (DRYLAIVHAVFALRTRTVTFG). A helical transmembrane segment spans residues 155 to 175 (IITSVITWVLAVLAALPEFMF). Residues 176–206 (YGTQGHFEVLFCGPSYPEKKEHHWKRFQALR) lie on the Extracellular side of the membrane. Residues 207-227 (MNIFGLALPLLIMIICYTGII) form a helical membrane-spanning segment. Residues 228-243 (KTLLRCPSKKKYKAIR) are Cytoplasmic-facing. A helical membrane pass occupies residues 244-264 (LIFVIMVVFFVFWTPYNLLLL). Over 265 to 287 (FSAFDLSFLDDCERSKQLDMAKH) the chain is Extracellular. The helical transmembrane segment at 288 to 308 (VTEVIAHTHCCINPIIYAFVG) threads the bilayer. The Cytoplasmic portion of the chain corresponds to 309–358 (ERFQKYLRHFLHRNVTMHLSKYIPFFTSEKLERSSSISPSSGDPELSVVF).

It belongs to the G-protein coupled receptor 1 family.

The protein resides in the cell membrane. Its function is as follows. Receptor for C-C type chemokine. Binds and responds to a variety of chemokines, including CCL11, CCL26, CCL7, CCL13, RANTES(CCL5) and CCL15. Subsequently transduces a signal by increasing the intracellular calcium ions level. In addition acts as a possible functional receptor for NARS1. This is C-C chemokine receptor type 3 (CCR3) from Cavia porcellus (Guinea pig).